Consider the following 117-residue polypeptide: Eukaryotic translation initiation factor 4E-binding protein (117 aa).

Phosphothreonine occurs at positions 37 and 46. The short motif at 54–60 is the YXXXXLphi motif; atypical element; it reads YERAFMK. S65 carries the post-translational modification Phosphoserine. Position 70 is a phosphothreonine (T70).

This sequence belongs to the eIF4E-binding protein family. As to quaternary structure, hypophosphorylated Thor/4E-BP competes with eIF4G1 to interact with eIF4E1; insulin stimulated Akt1 or Tor phosphorylation of Thor/4E-BP causes dissociation of the complex allowing eIF4G1 to bind and consequent initiation of translation. Phosphorylation at Thr-37, Thr-46, Ser-65 and Thr-70, corresponding to the hyperphosphorylated form, impairs its ability to prevent the interaction between eIF4G1 and eIF4E1, without affecting its interaction with free eIF4E1. Phosphorylated in rtesponse to insulin. Phosphorylation at Thr-46 is regulated by Tor and constitutes the major phosphorylation event that regulates activity. In terms of tissue distribution, widely expressed.

Repressor of translation initiation that regulates eIF4E1 activity by preventing its assembly into the eIF4F complex. Hypophosphorylated form competes with eIF4G1 and strongly binds to eIF4E1, leading to repress translation. In contrast, hyperphosphorylated form dissociates from eIF4E1, allowing interaction between eIF4G1 and eIF4E1, leading to initiation of translation. Acts as a regulator of various biological processes, such as innate immunity, cell growth or synaptic transmission. Acts downstream of phosphoinositide-3-kinase (PI3K) to regulate cell growth. Extends lifespan upon dietary restriction by regulating the mitochondrial translation. Acts as a regulator of lifespan in response to cold by regulating the mitochondrial translation. Acts as a negative regulator of presynaptic release of neurotransmitter in motor neurons: Thor expression is induced in response to insulin signaling, leading to prevent of translation of complexin (cpx), a protein known to regulate the exocytosis of synaptic vesicles. Acts as a negative regulator of synaptic strength at the neuromuscular junction: Thor expression in response to acute fasting prevents translation, thereby suppressing retrograde synaptic enhancement. This Drosophila melanogaster (Fruit fly) protein is Eukaryotic translation initiation factor 4E-binding protein.